Here is a 446-residue protein sequence, read N- to C-terminus: Tubulin alpha-1B chain (446 aa).

Q11 contributes to the GTP binding site. Residues 34 to 55 are disordered; sequence GRLMDDSPSKHDSGSTFFSETG. Residues 35–46 are compositionally biased toward basic and acidic residues; the sequence is RLMDDSPSKHDS. 7 residues coordinate GTP: E69, S138, G142, T143, S177, N204, and N226. Residue E69 coordinates Mg(2+). The active site involves E252.

This sequence belongs to the tubulin family. Dimer of alpha and beta chains. A typical microtubule is a hollow water-filled tube with an outer diameter of 25 nm and an inner diameter of 15 nM. Alpha-beta heterodimers associate head-to-tail to form protofilaments running lengthwise along the microtubule wall with the beta-tubulin subunit facing the microtubule plus end conferring a structural polarity. Microtubules usually have 13 protofilaments but different protofilament numbers can be found in some organisms and specialized cells. The cofactor is Mg(2+).

It localises to the cytoplasm. Its subcellular location is the cytoskeleton. The catalysed reaction is GTP + H2O = GDP + phosphate + H(+). Tubulin is the major constituent of microtubules, a cylinder consisting of laterally associated linear protofilaments composed of alpha- and beta-tubulin heterodimers. Microtubules grow by the addition of GTP-tubulin dimers to the microtubule end, where a stabilizing cap forms. Below the cap, tubulin dimers are in GDP-bound state, owing to GTPase activity of alpha-tubulin. This chain is Tubulin alpha-1B chain (TUB-1B), found in Schizophyllum commune (Split gill fungus).